The primary structure comprises 1057 residues: Probable E3 ubiquitin-protein ligase HERC4 (1057 aa).

7 RCC1 repeats span residues 1–51 (MLCW…FVLD), 52–101 (DGTV…ALND), 102–154 (KGQV…ALSK), 156–207 (SEVF…VLTL), 208–259 (SGAI…ALTK), 261–311 (GGVF…AFVP), and 313–366 (SGRI…CVKR). Residues 730–1057 (KNIDYKKPLK…IDHNEGFSLI (328 aa)) form the HECT domain. Cys-1025 serves as the catalytic Glycyl thioester intermediate.

Its subcellular location is the cytoplasm. It localises to the cytosol. The catalysed reaction is S-ubiquitinyl-[E2 ubiquitin-conjugating enzyme]-L-cysteine + [acceptor protein]-L-lysine = [E2 ubiquitin-conjugating enzyme]-L-cysteine + N(6)-ubiquitinyl-[acceptor protein]-L-lysine.. Its pathway is protein modification; protein ubiquitination. Probable E3 ubiquitin-protein ligase involved in either protein trafficking or in the distribution of cellular structures. Required for spermatozoon maturation and fertility, and for the removal of the cytoplasmic droplet of the spermatozoon. E3 ubiquitin-protein ligases accept ubiquitin from an E2 ubiquitin-conjugating enzyme in the form of a thioester and then directly transfer it to targeted substrates. This chain is Probable E3 ubiquitin-protein ligase HERC4 (Herc4), found in Rattus norvegicus (Rat).